The chain runs to 475 residues: MEDALLGAMTGPEDELGAELFGSERAFADGLALSPAGGAADRDELPVLADAYLGATEPGEPLLRALSPPPGAEVPAALLGDFPGLPELRSSDDAAPPPAYSVHVLSSLLPGARGPALLPLSAGVRVIPVEIKEAGGGVPGSSPEDAAFQAPLAQESCCKFSSSQEAEEASGCPRKKDSSPMVICQLKGGAQMLCIDNCGARELKALHLLPQYDDQSSFPQSELPKPMTTLVGRLLPVPAKLNLITQVDNGALPSAVNGAAFPSGPALQGPPKIALAGYCDCFSSGDFCNSCSCNNLRHELERFKAIKACLDRNPEAFQPKMGKGRLGAAKLRHSKGCNCKRSGCLKNYCECYEAKITCSSICKCIACKNYEESPERKMLMSTPHYMEPGDFESSHHLSPAKFSGPPRLRKNRQAFSCISWEVVEATCACLLAQGEEAEQERCSPSLAEQMVLEEFGRCLSQILHIEFKSKGLKIE.

A phosphoserine mark is found at Ser34 and Ser67. The region spanning 263-372 (SGPALQGPPK…KCIACKNYEE (110 aa)) is the CRC domain.

Belongs to the lin-54 family.

The protein resides in the cytoplasm. Its subcellular location is the nucleus. In terms of biological role, may have a role in spermatogenesis. The sequence is that of Tesmin from Rattus norvegicus (Rat).